A 1163-amino-acid polypeptide reads, in one-letter code: Rho GTPase-activating protein 45 (1163 aa).

The tract at residues 1 to 99 (MFSRKKRELM…KRPTSLSRHA (99 aa)) is disordered. Serine 23 and serine 25 each carry phosphoserine. Positions 55-65 (LPKELPRKDGA) are enriched in basic and acidic residues. Phosphoserine is present on residues serine 100, serine 120, and serine 126. Disordered regions lie at residues 118-137 (HRSP…GTGP), 262-282 (PPGD…EGTP), and 454-475 (EEEQ…LDKR). The region spanning 296–566 (EEVDVLLQRC…SSKLYDPGQQ (271 aa)) is the F-BAR domain. A coiled-coil region spans residues 403-526 (EHEKRRKEIK…QIQEVIRQSD (124 aa)). The span at 458-470 (AGTAPGAGSTATK) shows a compositional bias: low complexity. A phosphoserine mark is found at serine 596, serine 605, and serine 619. The segment at 610 to 695 (DVAGPEAAGS…VDPEGGAGAS (86 aa)) is disordered. Positions 633 to 644 (KGHRAGRGHQVH) are enriched in basic residues. The residue at position 646 (serine 646) is a Phosphoserine. Over residues 673-682 (TSSSGTMSST) the composition is skewed to low complexity. The Phorbol-ester/DAG-type zinc-finger motif lies at 729–774 (THRLRKLRTPAKCRECNSYVYFQGAECEECCLACHKKCLETLAIQC). The Rho-GAP domain occupies 788–1001 (QDFSHAARSA…TLIVHYGLVF (214 aa)). Serine 976, serine 1054, serine 1057, and serine 1059 each carry phosphoserine. Disordered regions lie at residues 1042 to 1067 (AAED…ASEL) and 1087 to 1163 (SEAS…PEFV). Residues 1087–1099 (SEASLEEASGSHS) show a composition bias toward low complexity. Residues 1125–1137 (SGFNTNQSNNVLQ) are compositionally biased toward polar residues.

The protein localises to the cytoplasm. Its subcellular location is the cell projection. It is found in the ruffle membrane. Functionally, contains a GTPase activator for the Rho-type GTPases (RhoGAP) domain that would be able to negatively regulate the actin cytoskeleton as well as cell spreading. However, also contains N-terminally a BAR-domin which is able to play an autoinhibitory effect on this RhoGAP activity. This is Rho GTPase-activating protein 45 from Pongo abelii (Sumatran orangutan).